The primary structure comprises 159 residues: SsrA-binding protein (159 aa).

The tract at residues 138–159 is disordered; it reads KRDTLKDKDWQRQKERMMKHSV.

This sequence belongs to the SmpB family.

Its subcellular location is the cytoplasm. Its function is as follows. Required for rescue of stalled ribosomes mediated by trans-translation. Binds to transfer-messenger RNA (tmRNA), required for stable association of tmRNA with ribosomes. tmRNA and SmpB together mimic tRNA shape, replacing the anticodon stem-loop with SmpB. tmRNA is encoded by the ssrA gene; the 2 termini fold to resemble tRNA(Ala) and it encodes a 'tag peptide', a short internal open reading frame. During trans-translation Ala-aminoacylated tmRNA acts like a tRNA, entering the A-site of stalled ribosomes, displacing the stalled mRNA. The ribosome then switches to translate the ORF on the tmRNA; the nascent peptide is terminated with the 'tag peptide' encoded by the tmRNA and targeted for degradation. The ribosome is freed to recommence translation, which seems to be the essential function of trans-translation. The protein is SsrA-binding protein of Alteromonas mediterranea (strain DSM 17117 / CIP 110805 / LMG 28347 / Deep ecotype).